The following is a 197-amino-acid chain: Large ribosomal subunit protein bL17 (197 aa).

The segment at 120-197 (DVPPADTGQG…EEEESEEDNT (78 aa)) is disordered. Residues 127–136 (GQGGSGGTRR) are compositionally biased toward gly residues. Acidic residues predominate over residues 159-197 (SSDEESESVEEDEATAEEASADAEQGEAEEEEESEEDNT).

Belongs to the bacterial ribosomal protein bL17 family. Part of the 50S ribosomal subunit. Contacts protein L32.

In Salinibacter ruber (strain DSM 13855 / M31), this protein is Large ribosomal subunit protein bL17.